The sequence spans 166 residues: Crossover junction endodeoxyribonuclease RuvC (166 aa).

Active-site residues include Asp7, Glu68, and Asp141. Residues Asp7, Glu68, and Asp141 each contribute to the Mg(2+) site.

Belongs to the RuvC family. In terms of assembly, homodimer which binds Holliday junction (HJ) DNA. The HJ becomes 2-fold symmetrical on binding to RuvC with unstacked arms; it has a different conformation from HJ DNA in complex with RuvA. In the full resolvosome a probable DNA-RuvA(4)-RuvB(12)-RuvC(2) complex forms which resolves the HJ. Requires Mg(2+) as cofactor.

The protein resides in the cytoplasm. The catalysed reaction is Endonucleolytic cleavage at a junction such as a reciprocal single-stranded crossover between two homologous DNA duplexes (Holliday junction).. In terms of biological role, the RuvA-RuvB-RuvC complex processes Holliday junction (HJ) DNA during genetic recombination and DNA repair. Endonuclease that resolves HJ intermediates. Cleaves cruciform DNA by making single-stranded nicks across the HJ at symmetrical positions within the homologous arms, yielding a 5'-phosphate and a 3'-hydroxyl group; requires a central core of homology in the junction. The consensus cleavage sequence is 5'-(A/T)TT(C/G)-3'. Cleavage occurs on the 3'-side of the TT dinucleotide at the point of strand exchange. HJ branch migration catalyzed by RuvA-RuvB allows RuvC to scan DNA until it finds its consensus sequence, where it cleaves and resolves the cruciform DNA. This chain is Crossover junction endodeoxyribonuclease RuvC, found in Caldicellulosiruptor saccharolyticus (strain ATCC 43494 / DSM 8903 / Tp8T 6331).